Consider the following 90-residue polypeptide: Probable Fe(2+)-trafficking protein (90 aa).

The protein belongs to the Fe(2+)-trafficking protein family.

Could be a mediator in iron transactions between iron acquisition and iron-requiring processes, such as synthesis and/or repair of Fe-S clusters in biosynthetic enzymes. This chain is Probable Fe(2+)-trafficking protein, found in Bordetella bronchiseptica (strain ATCC BAA-588 / NCTC 13252 / RB50) (Alcaligenes bronchisepticus).